The primary structure comprises 548 residues: Alpha-humulene synthase (548 aa).

Positions 302, 306, and 453 each coordinate Mg(2+). The DDXXD motif motif lies at 302-306; that stretch reads DDIYD.

The protein belongs to the terpene synthase family. As to expression, mostly expressed in rhizomes.

It carries out the reaction (2E,6E)-farnesyl diphosphate = alpha-humulene + diphosphate. Catalyzes the formation of alpha-humulene in the first step of zerumbone biosynthesis, a highly promising multi-anticancer agent. Also mediates formation of beta-caryophyllene at a much lower level. The chain is Alpha-humulene synthase (ZSS1) from Zingiber zerumbet (Shampoo ginger).